The chain runs to 624 residues: Chaperone protein HtpG (624 aa).

The segment at 1-336 (MKGQETRGFQ…SNDLPLNVSR (336 aa)) is a; substrate-binding. Residues 337-552 (EILQDSTVTR…ADEMGTQMAK (216 aa)) are b. Positions 553–624 (LFAAAGQAMP…IKRVNALLLG (72 aa)) are c.

The protein belongs to the heat shock protein 90 family. Homodimer.

It is found in the cytoplasm. Functionally, molecular chaperone. Has ATPase activity. This chain is Chaperone protein HtpG, found in Enterobacter sp. (strain 638).